The chain runs to 713 residues: F-box/WD repeat-containing protein 7 (713 aa).

Positions 1-150 (MNQELLSVGS…DEHTHNSNVT (150 aa)) are disordered. At Ser26 the chain carries Phosphoserine. Residues 46–55 (RHQEEEHTAR) show a composition bias toward basic and acidic residues. Polar residues predominate over residues 69 to 84 (QNDSQQGQVEENNNRF). Residues 87–135 (VDEDSSGNQEEQEEDEEHAGEQEEEEEEEEEEEEEEEMDQESDDFDQSD) show a composition bias toward acidic residues. A coiled-coil region spans residues 94 to 136 (NQEEQEEDEEHAGEQEEEEEEEEEEEEEEEMDQESDDFDQSDD). The span at 136-145 (DSSREDEHTH) shows a compositional bias: basic and acidic residues. At Thr211 the chain carries Phosphothreonine. Ser233 is modified (phosphoserine). Residues 284–330 (RDFISLLPKELALYVLSFLEPKDLLQAAQTCRYWRILAEDNLLWREK) form the F-box domain. WD repeat units lie at residues 384-424 (GHDD…RTLV), 426-462 (HTGGVWSSQMRDNIIISGSTDRTLKVWNAETGECIHT), 465-504 (GHTSTVRCMHLHEKRVVSGSRDATLRVWDIETGQCLHVLM), 506-542 (HVAAVRCVQYDGRRVVSGAYDFMVKVWDPETETCLHT), 545-584 (GHTNRVYSLQFDGIHVVSGSLDTSIRVWDVETGNCIHTLT), 586-624 (HQSLTSGMELKDNILVSGNADSTVKIWDIKTGQCLQTLQ), and 628-665 (KHQSAVTCLQFNKNFVITSSDDGTVKLWDLKTGEFIRN).

In terms of assembly, homodimer; homodimerization plays a role in substrate binding and/or ubiquitination and degradation. Component of the SCF(FBXW7) complex consisting of CUL1, RBX1, SKP1 and FBXW7. Interacts (via F-box domain) with SKP1. Interacts (via F-box domain) with pseudophosphatase STYX; the interaction is direct and prevents FBXW7 interaction with SKP1. Interacts with cyclin-E (CCNE1 or CCNE2). Interacts with PSEN1. Forms a trimeric complex with NOTCH1 and SGK1. Interacts with NOTCH1 intracellular domain/NICD and NOTCH4 intracellular domain/NICD. Interacts with NOTCH2 intracellular domain (N2ICD). Interacts with MYC (when phosphorylated). Interacts with USP28, counteracting ubiquitination of MYC. Interacts (when phosphorylated at Thr-211) with PIN1, disrupting FBXW7 dimerization and promoting FBXW7 autoubiquitination and degradation. Interacts with UBE2QL1. Interacts with FAM83D; promotes FBXW7 degradation. Interacts with MYCN; FBXW7 competes with AURKA for binding to unphosphorylated MYCN but not for binding to phosphorylated MYCN. Interacts with JUN. Found in a complex with JUN and PRR7. Interacts with JUN and PRR7; the interaction inhibits ubiquitination-mediated JUN degradation, promoting its phosphorylation and transcriptional activity. Interacts with NFE2L1. Interacts with NR1D1. Interacts with RICTOR; mediates RICTOR ubiquitination and degradation. Post-translationally, phosphorylation at Thr-211 promotes interaction with PIN1, leading to disrupt FBXW7 dimerization and promoting FBXW7 autoubiquitination and degradation. Phosphorylated by ATM at Ser-26 in response to DNA damage, promoting recruitment to DNA damage sites and 'Lys-63'-linked ubiquitination of phosphorylated XRCC4. Ubiquitinated: autoubiquitinates following phosphorylation at Thr-211 and subsequent interaction with PIN1. Ubiquitination leads to its degradation.

It is found in the nucleus. The protein resides in the nucleoplasm. It localises to the chromosome. It participates in protein modification; protein ubiquitination. In terms of biological role, substrate recognition component of a SCF (SKP1-CUL1-F-box protein) E3 ubiquitin-protein ligase complex which mediates the ubiquitination and subsequent proteasomal degradation of target proteins. Recognizes and binds phosphorylated sites/phosphodegrons within target proteins and thereafter brings them to the SCF complex for ubiquitination. Identified substrates include cyclin-E (CCNE1 or CCNE2), JUN, MYC, NOTCH1 released notch intracellular domain (NICD), NOTCH2, MCL1, MLST8, RICTOR and probably PSEN1. Acts as a negative regulator of JNK signaling by binding to phosphorylated JUN and promoting its ubiquitination and subsequent degradation. SCF(FBXW7) complex mediates the ubiquitination and subsequent degradation of NFE2L1. Involved in bone homeostasis and negative regulation of osteoclast differentiation. Regulates the amplitude of the cyclic expression of hepatic core clock genes and genes involved in lipid and glucose metabolism via ubiquitination and proteasomal degradation of their transcriptional repressor NR1D1; CDK1-dependent phosphorylation of NR1D1 is necessary for SCF(FBXW7)-mediated ubiquitination. Also able to promote 'Lys-63'-linked ubiquitination in response to DNA damage. The SCF(FBXW7) complex facilitates double-strand break repair following phosphorylation by ATM: phosphorylation promotes localization to sites of double-strand breaks and 'Lys-63'-linked ubiquitination of phosphorylated XRCC4, enhancing DNA non-homologous end joining. This is F-box/WD repeat-containing protein 7 from Rattus norvegicus (Rat).